We begin with the raw amino-acid sequence, 278 residues long: C-type lectin domain family 1 member A (278 aa).

Residues 1 to 42 (MLAKYSSTRDMLDADGDTTMSLHSQASATSQRPELGHTEHQR) form a disordered region. The Cytoplasmic segment spans residues 1–52 (MLAKYSSTRDMLDADGDTTMSLHSQASATSQRPELGHTEHQRPSSAWRPVAL). A compositionally biased stretch (polar residues) spans 18–32 (TTMSLHSQASATSQR). Residues 53–73 (ILLTLCLVLLIGLAALGLVFF) form a helical; Signal-anchor for type II membrane protein membrane-spanning segment. The Extracellular segment spans residues 74–278 (QFYQLSNTQQ…LHEPLSRRWR (205 aa)). N-linked (GlcNAc...) asparagine glycans are attached at residues asparagine 95 and asparagine 169. A C-type lectin domain is found at 144 to 258 (HGDKCYQFYK…CRELRRCACE (115 aa)). Intrachain disulfides connect cysteine 165/cysteine 257 and cysteine 236/cysteine 249.

The protein localises to the membrane. The protein is C-type lectin domain family 1 member A (CLEC1A) of Bos taurus (Bovine).